The following is a 104-amino-acid chain: Nucleoid-associated protein Bsph_0039 (104 aa).

The span at 1–12 (MRGMGNMQGMMK) shows a compositional bias: low complexity. The tract at residues 1–22 (MRGMGNMQGMMKKMQKMQKEMM) is disordered.

It belongs to the YbaB/EbfC family. Homodimer.

It is found in the cytoplasm. It localises to the nucleoid. Functionally, binds to DNA and alters its conformation. May be involved in regulation of gene expression, nucleoid organization and DNA protection. This is Nucleoid-associated protein Bsph_0039 from Lysinibacillus sphaericus (strain C3-41).